Reading from the N-terminus, the 160-residue chain is S-ribosylhomocysteine lyase (160 aa).

Residues His-57, His-61, and Cys-127 each contribute to the Fe cation site.

This sequence belongs to the LuxS family. In terms of assembly, homodimer. It depends on Fe cation as a cofactor.

It carries out the reaction S-(5-deoxy-D-ribos-5-yl)-L-homocysteine = (S)-4,5-dihydroxypentane-2,3-dione + L-homocysteine. Its function is as follows. Involved in the synthesis of autoinducer 2 (AI-2) which is secreted by bacteria and is used to communicate both the cell density and the metabolic potential of the environment. The regulation of gene expression in response to changes in cell density is called quorum sensing. Catalyzes the transformation of S-ribosylhomocysteine (RHC) to homocysteine (HC) and 4,5-dihydroxy-2,3-pentadione (DPD). The protein is S-ribosylhomocysteine lyase of Streptococcus agalactiae serotype V (strain ATCC BAA-611 / 2603 V/R).